A 738-amino-acid polypeptide reads, in one-letter code: AP-4 complex subunit beta-1 (738 aa).

A hinge region spans residues 534–600 (CSPKSDPSLG…NASFATSGHL (67 aa)). Residues 601 to 738 (ISEENKEGAQ…VIGTVGDIKS (138 aa)) form an ear; mediates interaction with TEPSIN region.

It belongs to the adaptor complexes large subunit family. In terms of assembly, adaptor protein complex 4 (AP-4) is a heterotetramer composed of two large adaptins (epsilon-type subunit AP4E1 and beta-type subunit AP4B1), a medium adaptin (mu-type subunit AP4M1) and a small adaptin (sigma-type AP4S1). Interacts with TEPSIN; this interaction requires the presence of a functional AP-4 complex. Interacts with GRIA2; probably indirect it mediates the somatodendritic localization of GRIA2 in neurons.

Its subcellular location is the golgi apparatus. The protein resides in the trans-Golgi network membrane. Functionally, component of the adaptor protein complex 4 (AP-4). Adaptor protein complexes are vesicle coat components involved both in vesicle formation and cargo selection. They control the vesicular transport of proteins in different trafficking pathways. AP-4 forms a non clathrin-associated coat on vesicles departing the trans-Golgi network (TGN) and may be involved in the targeting of proteins from the trans-Golgi network (TGN) to the endosomal-lysosomal system. It is also involved in protein sorting to the basolateral membrane in epithelial cells and the proper asymmetric localization of somatodendritic proteins in neurons. AP-4 is involved in the recognition and binding of tyrosine-based sorting signals found in the cytoplasmic part of cargos, but may also recognize other types of sorting signal. This Mus musculus (Mouse) protein is AP-4 complex subunit beta-1.